We begin with the raw amino-acid sequence, 199 residues long: uncharacterized protein (199 aa).

The helical transmembrane segment at 21 to 38 (ISPSATNFIVSLVIMILI) threads the bilayer.

It localises to the membrane. This is an uncharacterized protein from Saccharomyces cerevisiae (strain ATCC 204508 / S288c) (Baker's yeast).